The sequence spans 720 residues: Protein unc-112 (720 aa).

Disordered regions lie at residues 145–170 (DLRRGTSDADNMNGPLSMRPGEESVG) and 210–236 (MGTLPRHGTLPRGVSPSPGAYNDTMRR). The region spanning 288–614 (WLDSSRSLME…ALPEHGIHYF (327 aa)) is the FERM domain. A PH domain is found at 402–507 (VPELADYLKY…WMAACRLASR (106 aa)).

This sequence belongs to the kindlin family. Interacts with pat-4/ILK. Probably forms a complex with pat-4 and pat-6. Component of an integrin containing attachment complex, composed of at least pat-2, pat-3, pat-4, pat-6, unc-52, unc-97 and unc-112. Mainly expressed in muscle cells in both embryos and adults.

It is found in the cell membrane. The protein resides in the cytoplasm. It localises to the myofibril. Its subcellular location is the sarcomere. The protein localises to the m line. Component of an integrin containing attachment complex, which is required for muscle development and maintenance. Probable regulator of cell-extracellular matrix adhesion. Required during initial muscle assembly to form dense bodies and M-lines. The sequence is that of Protein unc-112 from Caenorhabditis elegans.